The sequence spans 507 residues: GMP synthase [glutamine-hydrolyzing] (507 aa).

One can recognise a Glutamine amidotransferase type-1 domain in the interval 9-202 (TILIIDFGSQ…VHRIVGVKPG (194 aa)). The active-site Nucleophile is C86. Active-site residues include H176 and E178. One can recognise a GMPS ATP-PPase domain in the interval 203 to 395 (WTMGAYREQA…LGLPDSFIGR (193 aa)). Residue 230–236 (SGGVDSS) coordinates ATP.

In terms of assembly, homodimer.

The enzyme catalyses XMP + L-glutamine + ATP + H2O = GMP + L-glutamate + AMP + diphosphate + 2 H(+). The protein operates within purine metabolism; GMP biosynthesis; GMP from XMP (L-Gln route): step 1/1. Functionally, catalyzes the synthesis of GMP from XMP. This chain is GMP synthase [glutamine-hydrolyzing], found in Brucella melitensis biotype 1 (strain ATCC 23456 / CCUG 17765 / NCTC 10094 / 16M).